The sequence spans 345 residues: MQGLEPSRVGRVGEVCRSVHKNVLTVPEHTVGTEAAAPMGDQADWMSQLCPQLWDVPLHHLSIPGSHDTMTYCLNRKSRISRASSWLLHLLGRVVPFITGPVVMKWSVTQTLDVTQQLDAGVRYLDLRIAHAPEGSTRNLCFVHMMYTKALVEDTLTEIAEWLQSHPREVVILACRNFEGMTCELHDYLAGCIVNIFGDMLCPSGEVPTLRQLWAREQQVIVSYEDEATVSRYDQLWPAIPYWWGNAVKTDVLLRFLETMKGQGRPDGLFVAGINITENLCYILLHPVDSLEEMTRRSLPLMTEWVCAQQPGQSPQCTNIIAGDFVDADGFVSKVISLNCKLLSP.

Positions 52 to 228 (QLWDVPLHHL…QVIVSYEDEA (177 aa)) constitute a PI-PLC X-box domain.

In terms of tissue distribution, expressed at highest levels in brain and kidney. Also detected in stomach, thymus and skeletal muscle.

The protein resides in the cytoplasm. This chain is PI-PLC X domain-containing protein 1 (Plcxd1), found in Mus musculus (Mouse).